An 810-amino-acid chain; its full sequence is Phenylalanine--tRNA ligase beta subunit (810 aa).

Residues 39 to 150 (RTWANGVVVG…ENLPLGSDVR (112 aa)) enclose the tRNA-binding domain. The B5 domain occupies 411–495 (TWSRSIFLRL…RLYGYDNFCD (85 aa)). Mg(2+) is bound by residues aspartate 473, aspartate 479, glutamate 482, and glutamate 483. The FDX-ACB domain maps to 716-809 (STYPASDRDI…LVEKFGVNLR (94 aa)).

Belongs to the phenylalanyl-tRNA synthetase beta subunit family. Type 1 subfamily. Tetramer of two alpha and two beta subunits. It depends on Mg(2+) as a cofactor.

It is found in the cytoplasm. It catalyses the reaction tRNA(Phe) + L-phenylalanine + ATP = L-phenylalanyl-tRNA(Phe) + AMP + diphosphate + H(+). The protein is Phenylalanine--tRNA ligase beta subunit of Trichormus variabilis (strain ATCC 29413 / PCC 7937) (Anabaena variabilis).